The primary structure comprises 507 residues: 2,3-bisphosphoglycerate-independent phosphoglycerate mutase (507 aa).

Positions 11 and 61 each coordinate Mn(2+). The active-site Phosphoserine intermediate is the S61. Substrate-binding positions include H122, 152 to 153, R183, R189, 258 to 261, and K332; these read RD and RNDR. Residues D399, H403, D440, H441, and H458 each contribute to the Mn(2+) site.

This sequence belongs to the BPG-independent phosphoglycerate mutase family. As to quaternary structure, monomer. The cofactor is Mn(2+).

The catalysed reaction is (2R)-2-phosphoglycerate = (2R)-3-phosphoglycerate. It participates in carbohydrate degradation; glycolysis; pyruvate from D-glyceraldehyde 3-phosphate: step 3/5. Functionally, catalyzes the interconversion of 2-phosphoglycerate and 3-phosphoglycerate. The chain is 2,3-bisphosphoglycerate-independent phosphoglycerate mutase from Parabacteroides distasonis (strain ATCC 8503 / DSM 20701 / CIP 104284 / JCM 5825 / NCTC 11152).